The primary structure comprises 1549 residues: Structural maintenance of chromosomes protein 4 (1549 aa).

The disordered stretch occupies residues 1–78 (MPPKTSAAPP…LFSLQLPSRP (78 aa)). Residues 26–36 (KPQKKTTKPVN) are compositionally biased toward basic residues. Basic and acidic residues predominate over residues 37–59 (RHKEGSKDPEEELQRAVNEKFDG). Residue 121–128 (GPNGSGKS) participates in ATP binding. Residues 326–604 (MKLEQRRRQR…QNSSCSSSNK (279 aa)) adopt a coiled-coil conformation. 2 stretches are compositionally biased toward basic and acidic residues: residues 396–407 (LSDLGTEETRRK) and 420–444 (AEAEKEKEVKKRSNLEAAPEKAERK). Disordered stretches follow at residues 396 to 444 (LSDL…AERK) and 460 to 485 (KTANEEADKNLDEFEKRSEAPKEEQK). Residues 619–734 (KSFHGRLGDL…GDSTQEAQRM (116 aa)) enclose the SMC hinge domain. 2 coiled-coil regions span residues 786-1058 (KAAE…KVNR) and 1144-1182 (EKINEISSRDAEEMQMKLKVCEQQVEALKAKVDISSIKA). Residues 1440–1459 (IQTTRDVTSRPQSKATTSGD) show a composition bias toward polar residues. A disordered region spans residues 1440 to 1549 (IQTTRDVTSR…AIVDDDDDME (110 aa)). The span at 1460-1474 (GTERPASRSASRPES) shows a compositional bias: basic and acidic residues. Polar residues predominate over residues 1510-1523 (TPPSKRSNSASTPK).

This sequence belongs to the SMC family. SMC4 subfamily. As to quaternary structure, component of the condensin I complex, which contains the mix-1/SMC2 and smc-4/SMC4 heterodimer, and three non SMC subunits that probably regulate the complex: dpy-26, capg-1 and dpy-28. Within the complex, interacts with mix-1, dpy-26, capg-1 and dpy-28. Component of the condensin II complex, which contains the mix-1/SMC2 and smc-4/SMC4 heterodimer, and three non SMC subunits, kle-2, capg-2 and hcp-6 that probably regulate the complex. Within the complex, interacts with mix-1, kle-2, capg-2 and hcp-6. Interacts with smcl-1.

The protein localises to the nucleus. It is found in the chromosome. Functionally, central component of the condensin I complex, a complex required for conversion of interphase chromatin into mitotic-like condense chromosomes. The condensin I complex introduces positive supercoils into relaxed DNA in the presence of type I topoisomerases. Converts nicked DNA into positive knotted forms in the presence of type II topoisomerases. Also a central component of the condensin II complex, a complex that seems to play a role in prophase chromosome condensation. Both the condensin complex I and II play a role in meiotic and mitotic chromosome segregation. Plays a role in robust cytokinesis upon the presence of chromatin obstructions. The sequence is that of Structural maintenance of chromosomes protein 4 (smc-4) from Caenorhabditis elegans.